The following is an 883-amino-acid chain: Valine--tRNA ligase (883 aa).

Residues 46–56 carry the 'HIGH' region motif; that stretch reads PNVTGKLHLGH. Residues 520-524 carry the 'KMSKS' region motif; sequence KMSKS. Residue Lys523 participates in ATP binding. A coiled-coil region spans residues 809 to 883; sequence LADLLNVEEE…RIDEMKKLVK (75 aa).

This sequence belongs to the class-I aminoacyl-tRNA synthetase family. ValS type 1 subfamily. Monomer.

The protein resides in the cytoplasm. It carries out the reaction tRNA(Val) + L-valine + ATP = L-valyl-tRNA(Val) + AMP + diphosphate. Catalyzes the attachment of valine to tRNA(Val). As ValRS can inadvertently accommodate and process structurally similar amino acids such as threonine, to avoid such errors, it has a 'posttransfer' editing activity that hydrolyzes mischarged Thr-tRNA(Val) in a tRNA-dependent manner. The protein is Valine--tRNA ligase of Streptococcus pneumoniae serotype 4 (strain ATCC BAA-334 / TIGR4).